The following is a 261-amino-acid chain: tRNA pseudouridine synthase A (261 aa).

Aspartate 51 (nucleophile) is an active-site residue. Tyrosine 109 is a substrate binding site.

Belongs to the tRNA pseudouridine synthase TruA family. In terms of assembly, homodimer.

It carries out the reaction uridine(38/39/40) in tRNA = pseudouridine(38/39/40) in tRNA. Its function is as follows. Formation of pseudouridine at positions 38, 39 and 40 in the anticodon stem and loop of transfer RNAs. The polypeptide is tRNA pseudouridine synthase A (Shewanella baltica (strain OS223)).